The following is a 207-amino-acid chain: Thiamine-phosphate synthase (207 aa).

Residues 35–39 (QYRDK) and asparagine 67 contribute to the 4-amino-2-methyl-5-(diphosphooxymethyl)pyrimidine site. Residues aspartate 68 and aspartate 86 each contribute to the Mg(2+) site. Position 105 (threonine 105) interacts with 4-amino-2-methyl-5-(diphosphooxymethyl)pyrimidine. 2-[(2R,5Z)-2-carboxy-4-methylthiazol-5(2H)-ylidene]ethyl phosphate is bound at residue 132–134 (SNT). Lysine 135 is a 4-amino-2-methyl-5-(diphosphooxymethyl)pyrimidine binding site. Glycine 162 is a 2-[(2R,5Z)-2-carboxy-4-methylthiazol-5(2H)-ylidene]ethyl phosphate binding site.

This sequence belongs to the thiamine-phosphate synthase family. Mg(2+) is required as a cofactor.

It carries out the reaction 2-[(2R,5Z)-2-carboxy-4-methylthiazol-5(2H)-ylidene]ethyl phosphate + 4-amino-2-methyl-5-(diphosphooxymethyl)pyrimidine + 2 H(+) = thiamine phosphate + CO2 + diphosphate. It catalyses the reaction 2-(2-carboxy-4-methylthiazol-5-yl)ethyl phosphate + 4-amino-2-methyl-5-(diphosphooxymethyl)pyrimidine + 2 H(+) = thiamine phosphate + CO2 + diphosphate. The catalysed reaction is 4-methyl-5-(2-phosphooxyethyl)-thiazole + 4-amino-2-methyl-5-(diphosphooxymethyl)pyrimidine + H(+) = thiamine phosphate + diphosphate. It participates in cofactor biosynthesis; thiamine diphosphate biosynthesis; thiamine phosphate from 4-amino-2-methyl-5-diphosphomethylpyrimidine and 4-methyl-5-(2-phosphoethyl)-thiazole: step 1/1. Condenses 4-methyl-5-(beta-hydroxyethyl)thiazole monophosphate (THZ-P) and 2-methyl-4-amino-5-hydroxymethyl pyrimidine pyrophosphate (HMP-PP) to form thiamine monophosphate (TMP). The polypeptide is Thiamine-phosphate synthase (Pseudomonas fluorescens (strain Pf0-1)).